The chain runs to 494 residues: Tripartite motif-containing protein 5 (494 aa).

A2 is modified (N-acetylalanine). An RING-type zinc finger spans residues 15 to 59 (CPICLELLTEPLSLDCGHSFCQACITANHKESTLHQGERSCPLCR). S86 is subject to Phosphoserine. A B box-type zinc finger spans residues 91 to 132 (QKVDLCARHGEKLLLFCQQDGNVICWLCERSQEHRGHHTFLV). Residues C96, H99, C118, and H124 each coordinate Zn(2+). Residues 140–223 (RENLQVVLEM…RLVQSENDMV (84 aa)) are a coiled coil. The segment at 186 to 199 (FKQLRDILDCEESN) is required for interaction with GABARAP and for autophagy. The B30.2/SPRY domain occupies 280–494 (PDLKGMLQVS…LPMTLCSPRS (215 aa)).

Belongs to the TRIM/RBCC family. In terms of assembly, can form homodimers and homotrimers. In addition to lower-order dimerization, also exhibits a higher-order multimerization and both low- and high-order multimerizations are essential for its restriction activity. Interacts with BTBD1 and BTBD2. Interacts with PSMC4, PSMC5, PSMD7 and HSPA8/HSC70. Interacts (via B30.2/SPRY domain) with HSPA1A/B. Interacts with PSMC2, MAP3K7/TAK1, TAB2 and TAB3. Interacts with SQSTM1. Interacts with TRIM6 and TRIM34. Interacts with ULK1 (phosphorylated form), GABARAP, GABARAPL1, GABARAPL2, MAP1LC3A, MAP1LC3C and BECN1. In terms of processing, degraded in a proteasome-independent fashion in the absence of viral infection but in a proteasome-dependent fashion following exposure to restriction sensitive virus. Autoubiquitinated in a RING finger- and UBE2D2-dependent manner. Monoubiquitinated by TRIM21. Deubiquitinated by Yersinia YopJ. Ubiquitination may not lead to proteasomal degradation.

The protein resides in the cytoplasm. It localises to the nucleus. It catalyses the reaction S-ubiquitinyl-[E2 ubiquitin-conjugating enzyme]-L-cysteine + [acceptor protein]-L-lysine = [E2 ubiquitin-conjugating enzyme]-L-cysteine + N(6)-ubiquitinyl-[acceptor protein]-L-lysine.. The protein operates within protein modification; protein ubiquitination. Functionally, capsid-specific restriction factor that prevents infection from non-host-adapted retroviruses. Blocks viral replication early in the life cycle, after viral entry but before reverse transcription. In addition to acting as a capsid-specific restriction factor, also acts as a pattern recognition receptor that activates innate immune signaling in response to the retroviral capsid lattice. Binding to the viral capsid triggers its E3 ubiquitin ligase activity, and in concert with the heterodimeric ubiquitin conjugating enzyme complex UBE2V1-UBE2N (also known as UBC13-UEV1A complex) generates 'Lys-63'-linked polyubiquitin chains, which in turn are catalysts in the autophosphorylation of the MAP3K7/TAK1 complex (includes TAK1, TAB2, and TAB3). Activation of the MAP3K7/TAK1 complex by autophosphorylation results in the induction and expression of NF-kappa-B and MAPK-responsive inflammatory genes, thereby leading to an innate immune response in the infected cell. Plays a role in regulating autophagy through activation of autophagy regulator BECN1 by causing its dissociation from its inhibitors BCL2 and TAB2. This chain is Tripartite motif-containing protein 5 (TRIM5), found in Plecturocebus donacophilus (Bolivian gray titi monkey).